A 475-amino-acid polypeptide reads, in one-letter code: Crocetin glucosyltransferase 3 (475 aa).

Histidine 16 serves as the catalytic Proton acceptor. Histidine 16 is a binding site for an anthocyanidin. The active-site Charge relay is the aspartate 123. Positions 144, 354, 356, 371, 374, 375, 376, and 379 each coordinate UDP-alpha-D-glucose. Alanine 394 is an an anthocyanidin binding site. The UDP-alpha-D-glucose site is built by glutamate 395 and glutamine 396.

This sequence belongs to the UDP-glycosyltransferase family. In terms of tissue distribution, mainly expressed in stamens.

The catalysed reaction is crocetin + UDP-alpha-D-glucose = beta-D-glucosyl crocetin + UDP. It carries out the reaction beta-D-glucosyl crocetin + UDP-alpha-D-glucose = bis(beta-D-glucosyl) crocetin + UDP. The enzyme catalyses beta-D-gentiobiosyl crocetin + UDP-alpha-D-glucose = beta-D-gentiobiosyl beta-D-glucosyl crocetin + UDP. Crocetin glucosyltransferase involved in the synthesis of crocin, one of the apocarotenoids responsible for the color and bitter taste of saffron. This Crocus sativus (Saffron) protein is Crocetin glucosyltransferase 3 (GLT3).